We begin with the raw amino-acid sequence, 155 residues long: Aspartate carbamoyltransferase regulatory chain (155 aa).

Zn(2+) contacts are provided by Cys109, Cys114, Cys138, and Cys141.

Belongs to the PyrI family. Contains catalytic and regulatory chains. Zn(2+) serves as cofactor.

Functionally, involved in allosteric regulation of aspartate carbamoyltransferase. The sequence is that of Aspartate carbamoyltransferase regulatory chain from Vibrio cholerae serotype O1 (strain ATCC 39315 / El Tor Inaba N16961).